Here is a 314-residue protein sequence, read N- to C-terminus: Formimidoylglutamase (314 aa).

6 residues coordinate Mn(2+): histidine 127, aspartate 153, histidine 155, aspartate 157, aspartate 245, and aspartate 247.

Belongs to the arginase family. Mn(2+) is required as a cofactor.

The catalysed reaction is N-formimidoyl-L-glutamate + H2O = formamide + L-glutamate. Its pathway is amino-acid degradation; L-histidine degradation into L-glutamate; L-glutamate from N-formimidoyl-L-glutamate (hydrolase route): step 1/1. In terms of biological role, catalyzes the conversion of N-formimidoyl-L-glutamate to L-glutamate and formamide. The sequence is that of Formimidoylglutamase from Aeromonas hydrophila subsp. hydrophila (strain ATCC 7966 / DSM 30187 / BCRC 13018 / CCUG 14551 / JCM 1027 / KCTC 2358 / NCIMB 9240 / NCTC 8049).